Reading from the N-terminus, the 302-residue chain is MEEKQKIAEAESLKKLAFFGISVSTIATLTAIIAVPMLYNYMQHVQSSLQNEVEFCKHRTDGLWDEFHRFETVKGVDSRIKRDTRSRRGGYAEGGAAAGGGGGGGGSCCSCGIGAAGPAGAPGKDGAPGEDGKAGNPGTAGSDAEAAAAPTASDFCFDCPPGPAGPAGGPGPAGPPGPAGADGNTPSGGGEGPAGPPGPPGPAGNPGTDGAPGNPGAPGQVTETPGTPGPAGAAGPPGPPGPAGNPGSAGASEPGPAGPAGDAGPDGAPGNAGAPGAPGEAGAPGSGGGCDHCPPPRTAPGY.

Disordered regions lie at residues 79 to 103 (RIKR…GGGG) and 119 to 302 (AGAP…APGY). Gly residues predominate over residues 91–103 (YAEGGAAAGGGGG). Triple-helical region stretches follow at residues 114-143 (GAAG…AGSD), 162-185 (GPAG…DGNT), 189-221 (GGEG…PGQV), 226-252 (GTPG…AGAS), and 255-290 (GPAG…GGGC). Over residues 137–154 (PGTAGSDAEAAAAPTASD) the composition is skewed to low complexity. Over residues 194-203 (AGPPGPPGPA) the composition is skewed to pro residues. 2 stretches are compositionally biased toward low complexity: residues 205–234 (NPGT…AGAA) and 245–281 (NPGS…PGEA). The segment covering 293–302 (CPPPRTAPGY) has biased composition (pro residues).

The protein belongs to the cuticular collagen family. As to quaternary structure, collagen polypeptide chains are complexed within the cuticle by disulfide bonds and other types of covalent cross-links.

Functionally, nematode cuticles are composed largely of collagen-like proteins. The cuticle functions both as an exoskeleton and as a barrier to protect the worm from its environment. The chain is Cuticle collagen 40 (col-40) from Caenorhabditis elegans.